Consider the following 216-residue polypeptide: U1 small nuclear ribonucleoprotein C (216 aa).

A Matrin-type zinc finger spans residues 4–36 (FFCDYCDVYLTHDSMSVRKAHNSGRNHLRNVVD). Disordered regions lie at residues 70–89 (PQNQPGGVPPGLGFPPPGAG) and 125–216 (PGGI…ADKR). Pro residues-rich tracts occupy residues 140–149 (PPMPPFPGMP) and 157–204 (GVPP…PPFG).

It belongs to the U1 small nuclear ribonucleoprotein C family. In terms of assembly, U1 snRNP is composed of the 7 core Sm proteins B/B', D1, D2, D3, E, F and G that assemble in a heptameric protein ring on the Sm site of the small nuclear RNA to form the core snRNP, and at least 3 U1 snRNP-specific proteins U1-70K, U1-A and U1-C. U1-C interacts with U1 snRNA and the 5' splice-site region of the pre-mRNA.

It localises to the nucleus. In terms of biological role, component of the spliceosomal U1 snRNP, which is essential for recognition of the pre-mRNA 5' splice-site and the subsequent assembly of the spliceosome. U1-C is directly involved in initial 5' splice-site recognition for both constitutive and regulated alternative splicing. The interaction with the 5' splice-site seems to precede base-pairing between the pre-mRNA and the U1 snRNA. Stimulates commitment or early (E) complex formation by stabilizing the base pairing of the 5' end of the U1 snRNA and the 5' splice-site region. This is U1 small nuclear ribonucleoprotein C from Neurospora crassa (strain ATCC 24698 / 74-OR23-1A / CBS 708.71 / DSM 1257 / FGSC 987).